The following is a 281-amino-acid chain: Imidazole glycerol phosphate synthase subunit HisF (281 aa).

Active-site residues include Asp12 and Asp131. The interval 256–281 (VRQAEPLPQPAREGLGDSARRAMSSG) is disordered.

It belongs to the HisA/HisF family. In terms of assembly, heterodimer of HisH and HisF.

Its subcellular location is the cytoplasm. It catalyses the reaction 5-[(5-phospho-1-deoxy-D-ribulos-1-ylimino)methylamino]-1-(5-phospho-beta-D-ribosyl)imidazole-4-carboxamide + L-glutamine = D-erythro-1-(imidazol-4-yl)glycerol 3-phosphate + 5-amino-1-(5-phospho-beta-D-ribosyl)imidazole-4-carboxamide + L-glutamate + H(+). It functions in the pathway amino-acid biosynthesis; L-histidine biosynthesis; L-histidine from 5-phospho-alpha-D-ribose 1-diphosphate: step 5/9. Functionally, IGPS catalyzes the conversion of PRFAR and glutamine to IGP, AICAR and glutamate. The HisF subunit catalyzes the cyclization activity that produces IGP and AICAR from PRFAR using the ammonia provided by the HisH subunit. In Thermosynechococcus vestitus (strain NIES-2133 / IAM M-273 / BP-1), this protein is Imidazole glycerol phosphate synthase subunit HisF.